A 207-amino-acid chain; its full sequence is CASP-like protein 1D1 (207 aa).

Residues 1–40 (MATVDGTTAPSSGGKTATVALESGGGRYGGPAPAKCSGAN) lie on the Cytoplasmic side of the membrane. The helical transmembrane segment at 41–61 (LALRALLFAVSLSALVVLVTA) threads the bilayer. Residues 62-89 (KQTVMVPFVIRPPQFILAPVPAKYTHSP) lie on the Extracellular side of the membrane. The helical transmembrane segment at 90-110 (ALIYLLAALCATCFYSLITAI) threads the bilayer. The Cytoplasmic portion of the chain corresponds to 111–124 (SSVRLLSSSACSAK). A helical membrane pass occupies residues 125–145 (TLFYLILLDVFYAAVMASATG). Residues 146-176 (TAGAVAWVGLKGNSHTRWNKICNVYGKFCRH) lie on the Extracellular side of the membrane. Residues 177-197 (IGSSTFLALIAAIVLVLLAFL) form a helical membrane-spanning segment. Residues 198 to 207 (NAYSLYRRSR) are Cytoplasmic-facing.

It belongs to the Casparian strip membrane proteins (CASP) family. In terms of assembly, homodimer and heterodimers.

The protein resides in the cell membrane. The sequence is that of CASP-like protein 1D1 from Oryza sativa subsp. japonica (Rice).